The primary structure comprises 770 residues: Molybdenum cofactor sulfurase (770 aa).

An N6-(pyridoxal phosphate)lysine modification is found at Lys-231. Residue Cys-395 is part of the active site. Residues 601–770 (DWVSRALGVS…TVSGVIEESE (170 aa)) enclose the MOSC domain.

This sequence belongs to the class-V pyridoxal-phosphate-dependent aminotransferase family. MOCOS subfamily. Pyridoxal 5'-phosphate serves as cofactor.

It carries out the reaction Mo-molybdopterin + L-cysteine + AH2 = thio-Mo-molybdopterin + L-alanine + A + H2O. Functionally, sulfurates the molybdenum cofactor. Sulfation of molybdenum is essential for xanthine dehydrogenase (XDH) and aldehyde oxidase (ADO) enzymes in which molybdenum cofactor is liganded by 1 oxygen and 1 sulfur atom in active form. This Anopheles gambiae (African malaria mosquito) protein is Molybdenum cofactor sulfurase.